We begin with the raw amino-acid sequence, 72 residues long: UPF0352 protein Shal_2512 (72 aa).

The protein belongs to the UPF0352 family.

In Shewanella halifaxensis (strain HAW-EB4), this protein is UPF0352 protein Shal_2512.